We begin with the raw amino-acid sequence, 615 residues long: Chaperone protein HscA homolog (615 aa).

The protein belongs to the heat shock protein 70 family.

Chaperone involved in the maturation of iron-sulfur cluster-containing proteins. Has a low intrinsic ATPase activity which is markedly stimulated by HscB. The sequence is that of Chaperone protein HscA homolog from Aeromonas salmonicida (strain A449).